The chain runs to 316 residues: UDP-N-acetylenolpyruvoylglucosamine reductase (316 aa).

The region spanning 30-194 (VGGEADYLVF…LSVKFALAPG (165 aa)) is the FAD-binding PCMH-type domain. Arginine 173 is a catalytic residue. Serine 223 serves as the catalytic Proton donor. Glutamate 293 is a catalytic residue.

This sequence belongs to the MurB family. FAD is required as a cofactor.

It localises to the cytoplasm. It catalyses the reaction UDP-N-acetyl-alpha-D-muramate + NADP(+) = UDP-N-acetyl-3-O-(1-carboxyvinyl)-alpha-D-glucosamine + NADPH + H(+). Its pathway is cell wall biogenesis; peptidoglycan biosynthesis. Functionally, cell wall formation. This Streptococcus pneumoniae serotype 2 (strain D39 / NCTC 7466) protein is UDP-N-acetylenolpyruvoylglucosamine reductase.